Consider the following 82-residue polypeptide: Penaeidin-3d (82 aa).

A signal peptide spans 1–19 (MRLVVCLVFLASFALVCQG). A Pyrrolidone carboxylic acid modification is found at Gln-20. Intrachain disulfides connect Cys-51-Cys-66, Cys-55-Cys-73, and Cys-67-Cys-74. Ser-81 bears the Serine amide mark.

Belongs to the penaeidin family.

The protein localises to the cytoplasmic granule. Functionally, antibacterial and antifungal activity. Presents chitin-binding activity. The chain is Penaeidin-3d from Penaeus vannamei (Whiteleg shrimp).